Consider the following 210-residue polypeptide: Shikimate kinase (210 aa).

34-39 (GVGKSV) is a binding site for ATP. Ser-38 provides a ligand contact to Mg(2+). Asp-56, Arg-80, and Gly-102 together coordinate substrate. Arg-140 provides a ligand contact to ATP. Residue Arg-159 coordinates substrate.

It belongs to the shikimate kinase family. As to quaternary structure, monomer. Requires Mg(2+) as cofactor.

It is found in the cytoplasm. It catalyses the reaction shikimate + ATP = 3-phosphoshikimate + ADP + H(+). The protein operates within metabolic intermediate biosynthesis; chorismate biosynthesis; chorismate from D-erythrose 4-phosphate and phosphoenolpyruvate: step 5/7. In terms of biological role, catalyzes the specific phosphorylation of the 3-hydroxyl group of shikimic acid using ATP as a cosubstrate. The protein is Shikimate kinase of Bartonella henselae (strain ATCC 49882 / DSM 28221 / CCUG 30454 / Houston 1) (Rochalimaea henselae).